Reading from the N-terminus, the 178-residue chain is ATP synthase subunit delta (178 aa).

It belongs to the ATPase delta chain family. As to quaternary structure, F-type ATPases have 2 components, F(1) - the catalytic core - and F(0) - the membrane proton channel. F(1) has five subunits: alpha(3), beta(3), gamma(1), delta(1), epsilon(1). F(0) has three main subunits: a(1), b(2) and c(10-14). The alpha and beta chains form an alternating ring which encloses part of the gamma chain. F(1) is attached to F(0) by a central stalk formed by the gamma and epsilon chains, while a peripheral stalk is formed by the delta and b chains.

It localises to the cell inner membrane. Functionally, f(1)F(0) ATP synthase produces ATP from ADP in the presence of a proton or sodium gradient. F-type ATPases consist of two structural domains, F(1) containing the extramembraneous catalytic core and F(0) containing the membrane proton channel, linked together by a central stalk and a peripheral stalk. During catalysis, ATP synthesis in the catalytic domain of F(1) is coupled via a rotary mechanism of the central stalk subunits to proton translocation. This protein is part of the stalk that links CF(0) to CF(1). It either transmits conformational changes from CF(0) to CF(1) or is implicated in proton conduction. The sequence is that of ATP synthase subunit delta from Hydrogenovibrio crunogenus (strain DSM 25203 / XCL-2) (Thiomicrospira crunogena).